The primary structure comprises 261 residues: Lipase LipV (261 aa).

Ser-87 functions as the Nucleophile in the catalytic mechanism. Catalysis depends on charge relay system residues Asp-217 and His-240.

The protein belongs to the AB hydrolase superfamily.

The enzyme catalyses a carboxylic ester + H2O = an alcohol + a carboxylate + H(+). It carries out the reaction a tetradecanoate ester + H2O = an aliphatic alcohol + tetradecanoate + H(+). It catalyses the reaction decanoate ester + H2O = decanoate + an aliphatic alcohol + H(+). The catalysed reaction is an octanoate ester + H2O = an aliphatic alcohol + octanoate + H(+). The enzyme catalyses a dodecanoate ester + H2O = an aliphatic alcohol + dodecanoate + H(+). It carries out the reaction a butanoate ester + H2O = an aliphatic alcohol + butanoate + H(+). It catalyses the reaction hexadecanoate ester + H2O = an aliphatic alcohol + hexadecanoate + H(+). The catalysed reaction is octadecanoate ester + H2O = an aliphatic alcohol + octadecanoate + H(+). With respect to regulation, is inhibited by tetrahydrolipstatin, a specific lipase inhibitor and RHC 80267, a diacylglycerol lipase inhibitor, but not by phenylglyoxal and iodoacetate. Functionally, lipase that displays broad substrate specificity and preferentially hydrolyzes p-nitrophenyl myristate in vitro. Also shows significant activity with pNP-butyrate (68%), pNP-octanoate (82%), pNP-decanoate (90%), and pNP-laurate (74%). Is probably involved in lipid catabolism. Is active at low pH, and might play some important role in mycobacterial biology in macrophages where the bacteria encounters acidic stress. This Mycobacterium tuberculosis (strain ATCC 25618 / H37Rv) protein is Lipase LipV.